The primary structure comprises 97 residues: MRGHKPTLKEYVLDLYPEPTDLYCYEQLSDSSDEDEGLDRPDGQAQPATADYYIVTCCHTCNTTVRLCVNSTASDLRTIQQLLMGTVNIVCPTCAQQ.

The E7 terminal domain stretch occupies residues 1–40; sequence MRGHKPTLKEYVLDLYPEPTDLYCYEQLSDSSDEDEGLDR. The LXCXE motif; interaction with host RB1 and TMEM173/STING motif lies at 22–26; the sequence is LYCYE. A zinc finger lies at 58–94; it reads CHTCNTTVRLCVNSTASDLRTIQQLLMGTVNIVCPTC. Positions 76 to 84 match the Nuclear export signal motif; the sequence is LRTIQQLLM.

Belongs to the papillomaviridae E7 protein family. Homodimer. Homooligomer. Interacts with host RB1; this interaction induces dissociation of RB1-E2F1 complex thereby disrupting RB1 activity. Interacts with host EP300; this interaction represses EP300 transcriptional activity. Interacts with protein E2; this interaction inhibits E7 oncogenic activity. Interacts with host TMEM173/STING; this interaction impairs the ability of TMEM173/STING to sense cytosolic DNA and promote the production of type I interferon (IFN-alpha and IFN-beta). Highly phosphorylated.

The protein resides in the host cytoplasm. Its subcellular location is the host nucleus. In terms of biological role, plays a role in viral genome replication by driving entry of quiescent cells into the cell cycle. Stimulation of progression from G1 to S phase allows the virus to efficiently use the cellular DNA replicating machinery to achieve viral genome replication. E7 protein has both transforming and trans-activating activities. Induces the disassembly of the E2F1 transcription factor from RB1, with subsequent transcriptional activation of E2F1-regulated S-phase genes. Interferes with host histone deacetylation mediated by HDAC1 and HDAC2, leading to transcription activation. Also plays a role in the inhibition of both antiviral and antiproliferative functions of host interferon alpha. Interaction with host TMEM173/STING impairs the ability of TMEM173/STING to sense cytosolic DNA and promote the production of type I interferon (IFN-alpha and IFN-beta). The protein is Protein E7 of Human papillomavirus 33.